Here is a 496-residue protein sequence, read N- to C-terminus: Probable cytosol aminopeptidase (496 aa).

The Mn(2+) site is built by Lys-262 and Asp-267. Residue Lys-274 is part of the active site. Mn(2+) contacts are provided by Asp-285, Asp-344, and Glu-346. Arg-348 is a catalytic residue.

This sequence belongs to the peptidase M17 family. Requires Mn(2+) as cofactor.

The protein resides in the cytoplasm. The catalysed reaction is Release of an N-terminal amino acid, Xaa-|-Yaa-, in which Xaa is preferably Leu, but may be other amino acids including Pro although not Arg or Lys, and Yaa may be Pro. Amino acid amides and methyl esters are also readily hydrolyzed, but rates on arylamides are exceedingly low.. It carries out the reaction Release of an N-terminal amino acid, preferentially leucine, but not glutamic or aspartic acids.. Its function is as follows. Presumably involved in the processing and regular turnover of intracellular proteins. Catalyzes the removal of unsubstituted N-terminal amino acids from various peptides. This Rhizobium leguminosarum bv. trifolii (strain WSM2304) protein is Probable cytosol aminopeptidase.